A 137-amino-acid chain; its full sequence is Kunitz-type trypsin inhibitor alpha chain (137 aa).

A disulfide bridge connects residues Cys-40 and Cys-86.

Belongs to the protease inhibitor I3 (leguminous Kunitz-type inhibitor) family. Heterodimer of an alpha and a beta chain linked by a disulfide bond.

Functionally, inhibition of trypsin. The chain is Kunitz-type trypsin inhibitor alpha chain from Neltuma juliflora (Mesquite).